A 95-amino-acid polypeptide reads, in one-letter code: Small ribosomal subunit protein bS20c (95 aa).

This sequence belongs to the bacterial ribosomal protein bS20 family.

It localises to the plastid. It is found in the cyanelle. In terms of biological role, binds directly to 16S ribosomal RNA. The protein is Small ribosomal subunit protein bS20c (rps20) of Cyanophora paradoxa.